A 722-amino-acid chain; its full sequence is G2-specific protein kinase fin1 (722 aa).

Positions 4–281 constitute a Protein kinase domain; the sequence is YKILECIGHG…TYQLLRSPIL (278 aa). ATP-binding positions include 10 to 18 and K33; that span reads IGHGSFGRI. Residue D151 is the Proton acceptor of the active site. Residues 528-557 form a disordered region; it reads LSVESDETAVSASSGESVPTDSTLTDTKSK. A compositionally biased stretch (polar residues) spans 535-546; the sequence is TAVSASSGESVP.

This sequence belongs to the protein kinase superfamily. Ser/Thr protein kinase family. NIMA subfamily.

Its subcellular location is the cytoplasm. It is found in the cytoskeleton. The protein localises to the microtubule organizing center. The protein resides in the spindle pole body. The catalysed reaction is L-seryl-[protein] + ATP = O-phospho-L-seryl-[protein] + ADP + H(+). It catalyses the reaction L-threonyl-[protein] + ATP = O-phospho-L-threonyl-[protein] + ADP + H(+). Its function is as follows. Promotes chromosome condensation and nuclear envelope dynamics during mitosis. Activity appears at metaphase-anaphase transition. This Schizosaccharomyces pombe (strain 972 / ATCC 24843) (Fission yeast) protein is G2-specific protein kinase fin1 (fin1).